A 229-amino-acid chain; its full sequence is Large ribosomal subunit protein uL1 (229 aa).

The protein belongs to the universal ribosomal protein uL1 family. In terms of assembly, part of the 50S ribosomal subunit.

In terms of biological role, binds directly to 23S rRNA. The L1 stalk is quite mobile in the ribosome, and is involved in E site tRNA release. Protein L1 is also a translational repressor protein, it controls the translation of the L11 operon by binding to its mRNA. The sequence is that of Large ribosomal subunit protein uL1 from Staphylococcus aureus (strain MRSA252).